Reading from the N-terminus, the 246-residue chain is Mast cell protease 4 (246 aa).

An N-terminal signal peptide occupies residues 1-18 (MQALLFLMALLLPSGAGA). Positions 19–20 (EE) are cleaved as a propeptide — activation peptide. Positions 21–244 (IIGGVESRPH…YVPWINRVIK (224 aa)) constitute a Peptidase S1 domain. A disulfide bridge connects residues Cys-50 and Cys-66. Active-site charge relay system residues include His-65 and Asp-109. 2 disulfides stabilise this stretch: Cys-143/Cys-208 and Cys-174/Cys-187. Catalysis depends on Ser-202, which acts as the Charge relay system.

It belongs to the peptidase S1 family. Granzyme subfamily. Monomer. Interacts with iripin-2, a serine protease inhibitor from Ixodes ricinus saliva. Submucosal mast cells. In femoral muscle, detected in myocytes but not in mast cells.

Completely inhibited by serine protease inhibitors such as chymostatin, diisopropylfluorophosphate and phenylmethylsulfonyl fluoride, but not by p-tosyl-L-phenylalanine chloromethyl ketone, p-tosyl-L-lysine chloromethyl ketone, pepstatin, E-64, EDTA or o-phenanthroline. Also inhibited by lima bean trypsin inhibitor, soy bean trypsin inhibitor and human plasma alpha1-antichymotrypsin. Its function is as follows. Has chymotrypsin-like activity. Hydrolyzes the amide bonds of synthetic substrates having Tyr and Phe residues at the P1 position. Preferentially hydrolyzes the 'Tyr-4-|-Ile-5' bond of angiotensin I and the 'Phe-20-|-Ala-21' bond of amyloid beta-protein, and is less active towards the 'Phe-8-|-His-9' bond of angiotensin I and the 'Phe-4-|-Ala-5' and 'Tyr-10-|-Glu-11' bonds of amyloid beta-protein. Involved in thrombin regulation and fibronectin processing. This is Mast cell protease 4 (Mcpt4) from Mus musculus (Mouse).